An 82-amino-acid polypeptide reads, in one-letter code: Putative membrane protein insertion efficiency factor (82 aa).

It belongs to the UPF0161 family.

The protein localises to the cell inner membrane. In terms of biological role, could be involved in insertion of integral membrane proteins into the membrane. This is Putative membrane protein insertion efficiency factor from Thermus thermophilus (strain ATCC BAA-163 / DSM 7039 / HB27).